A 146-amino-acid chain; its full sequence is Universal stress protein MTH_1154 (146 aa).

It belongs to the universal stress protein A family.

The chain is Universal stress protein MTH_1154 from Methanothermobacter thermautotrophicus (strain ATCC 29096 / DSM 1053 / JCM 10044 / NBRC 100330 / Delta H) (Methanobacterium thermoautotrophicum).